Here is a 328-residue protein sequence, read N- to C-terminus: D-cysteine desulfhydrase (328 aa).

At K51 the chain carries N6-(pyridoxal phosphate)lysine.

This sequence belongs to the ACC deaminase/D-cysteine desulfhydrase family. As to quaternary structure, homodimer. Pyridoxal 5'-phosphate serves as cofactor.

The catalysed reaction is D-cysteine + H2O = hydrogen sulfide + pyruvate + NH4(+) + H(+). Its function is as follows. Catalyzes the alpha,beta-elimination reaction of D-cysteine and of several D-cysteine derivatives. It could be a defense mechanism against D-cysteine. In Escherichia fergusonii (strain ATCC 35469 / DSM 13698 / CCUG 18766 / IAM 14443 / JCM 21226 / LMG 7866 / NBRC 102419 / NCTC 12128 / CDC 0568-73), this protein is D-cysteine desulfhydrase.